Reading from the N-terminus, the 150-residue chain is Nascent polypeptide-associated complex subunit beta (150 aa).

Disordered regions lie at residues 1 to 45 (MADV…LQQS) and 123 to 150 (YQNMQQKKDDDDEIPDLVAGESFENKVE). Basic residues predominate over residues 23-32 (TPRRKVKRAP). Residues 36–101 (GADDKKLQQS…GEDKELTELV (66 aa)) form the NAC-A/B domain.

It belongs to the NAC-beta family. As to quaternary structure, part of the nascent polypeptide-associated complex (NAC), consisting of EGD2 and EGD1. NAC associates with ribosomes via EGD1.

The protein resides in the cytoplasm. It localises to the nucleus. In terms of biological role, component of the nascent polypeptide-associated complex (NAC), a dynamic component of the ribosomal exit tunnel, protecting the emerging polypeptides from interaction with other cytoplasmic proteins to ensure appropriate nascent protein targeting. The NAC complex also promotes mitochondrial protein import by enhancing productive ribosome interactions with the outer mitochondrial membrane and blocks the inappropriate interaction of ribosomes translating non-secretory nascent polypeptides with translocation sites in the membrane of the endoplasmic reticulum. EGD1 may act as a transcription factor that exert a negative effect on the expression of several genes that are transcribed by RNA polymerase II. In Chaetomium globosum (strain ATCC 6205 / CBS 148.51 / DSM 1962 / NBRC 6347 / NRRL 1970) (Soil fungus), this protein is Nascent polypeptide-associated complex subunit beta (EGD1).